The primary structure comprises 624 residues: 1-deoxy-D-xylulose-5-phosphate synthase (624 aa).

Thiamine diphosphate contacts are provided by residues His-74 and 115–117 (GHS). Mg(2+) is bound at residue Asp-146. Thiamine diphosphate-binding positions include 147 to 148 (GA), Asn-175, Tyr-286, and Glu-366. Asn-175 provides a ligand contact to Mg(2+).

It belongs to the transketolase family. DXPS subfamily. In terms of assembly, homodimer. Mg(2+) serves as cofactor. The cofactor is thiamine diphosphate.

It catalyses the reaction D-glyceraldehyde 3-phosphate + pyruvate + H(+) = 1-deoxy-D-xylulose 5-phosphate + CO2. The protein operates within metabolic intermediate biosynthesis; 1-deoxy-D-xylulose 5-phosphate biosynthesis; 1-deoxy-D-xylulose 5-phosphate from D-glyceraldehyde 3-phosphate and pyruvate: step 1/1. In terms of biological role, catalyzes the acyloin condensation reaction between C atoms 2 and 3 of pyruvate and glyceraldehyde 3-phosphate to yield 1-deoxy-D-xylulose-5-phosphate (DXP). The sequence is that of 1-deoxy-D-xylulose-5-phosphate synthase from Clostridium kluyveri (strain NBRC 12016).